The primary structure comprises 715 residues: DNA ligase (715 aa).

Residues 47–51, 96–97, and glutamate 129 each bind NAD(+); these read DADYD and SL. The active-site N6-AMP-lysine intermediate is lysine 131. Arginine 152, glutamate 189, lysine 306, and lysine 330 together coordinate NAD(+). The Zn(2+) site is built by cysteine 435, cysteine 438, cysteine 453, and cysteine 459. The BRCT domain maps to 637 to 715; it reads KRDSAVAGKT…EDEWLALIQG (79 aa).

The protein belongs to the NAD-dependent DNA ligase family. LigA subfamily. Requires Mg(2+) as cofactor. The cofactor is Mn(2+).

It carries out the reaction NAD(+) + (deoxyribonucleotide)n-3'-hydroxyl + 5'-phospho-(deoxyribonucleotide)m = (deoxyribonucleotide)n+m + AMP + beta-nicotinamide D-nucleotide.. In terms of biological role, DNA ligase that catalyzes the formation of phosphodiester linkages between 5'-phosphoryl and 3'-hydroxyl groups in double-stranded DNA using NAD as a coenzyme and as the energy source for the reaction. It is essential for DNA replication and repair of damaged DNA. The chain is DNA ligase from Rhodopseudomonas palustris (strain BisA53).